The following is a 199-amino-acid chain: Ras-related protein Rab-7b (199 aa).

GTP is bound by residues 15–22 (GAIGVGKT), 34–40 (YEEYQTT), 63–67 (DTGGQ), 124–127 (NKID), and 154–155 (AK). 2 short sequence motifs (switch) span residues 28-41 (YVHKTFYEEYQTTL) and 67-82 (QERFRSMVSTFYKGSD). A Phosphoserine modification is found at S186. 2 S-geranylgeranyl cysteine lipidation sites follow: C198 and C199.

This sequence belongs to the small GTPase superfamily. Rab family. Expressed in heart, placenta, lung, skeletal muscle and peripheral blood leukocyte.

The protein localises to the late endosome. It is found in the lysosome. It localises to the golgi apparatus. Its subcellular location is the trans-Golgi network. The protein resides in the cytoplasmic vesicle. The protein localises to the phagosome. It is found in the phagosome membrane. Functionally, controls vesicular trafficking from endosomes to the trans-Golgi network (TGN). Acts as a negative regulator of TLR9 signaling and can suppress TLR9-triggered TNFA, IL6, and IFNB production in macrophages by promoting TLR9 lysosomal degradation. Also negatively regulates TLR4 signaling in macrophages by promoting lysosomal degradation of TLR4. Promotes megakaryocytic differentiation by increasing NF-kappa-B-dependent IL6 production and subsequently enhancing the association of STAT3 with GATA1. Not involved in the regulation of the EGF- and EGFR degradation pathway. The protein is Ras-related protein Rab-7b (RAB7B) of Homo sapiens (Human).